The sequence spans 271 residues: Glutamate racemase (271 aa).

Substrate is bound by residues 10–11 (DS) and 42–43 (YG). Cys-73 serves as the catalytic Proton donor/acceptor. 74–75 (NT) provides a ligand contact to substrate. The Proton donor/acceptor role is filled by Cys-183. 184–185 (TH) is a substrate binding site.

The protein belongs to the aspartate/glutamate racemases family.

It catalyses the reaction L-glutamate = D-glutamate. It participates in cell wall biogenesis; peptidoglycan biosynthesis. In terms of biological role, provides the (R)-glutamate required for cell wall biosynthesis. This is Glutamate racemase from Streptococcus thermophilus (strain CNRZ 1066).